The chain runs to 319 residues: 4-diphosphocytidyl-2-C-methyl-D-erythritol kinase (319 aa).

Residue lysine 21 is part of the active site. Residue 106–116 participates in ATP binding; the sequence is PIGAGLAGGSS. Aspartate 148 is an active-site residue.

Belongs to the GHMP kinase family. IspE subfamily.

The enzyme catalyses 4-CDP-2-C-methyl-D-erythritol + ATP = 4-CDP-2-C-methyl-D-erythritol 2-phosphate + ADP + H(+). It participates in isoprenoid biosynthesis; isopentenyl diphosphate biosynthesis via DXP pathway; isopentenyl diphosphate from 1-deoxy-D-xylulose 5-phosphate: step 3/6. In terms of biological role, catalyzes the phosphorylation of the position 2 hydroxy group of 4-diphosphocytidyl-2C-methyl-D-erythritol. The protein is 4-diphosphocytidyl-2-C-methyl-D-erythritol kinase of Prochlorococcus marinus (strain SARG / CCMP1375 / SS120).